The primary structure comprises 374 residues: LIM domain-binding protein 1-A (374 aa).

Disordered stretches follow at residues Met1 to His24, Pro249 to Ser297, and Thr322 to Gln374. The segment covering Ser267–Ser297 has biased composition (low complexity). Positions Asp299–Glu338 constitute an LIM interaction domain (LID) domain. Over residues Phe341–Gln374 the composition is skewed to polar residues.

This sequence belongs to the LDB family. Expressed ubiquitously in the embryo and adult.

The protein resides in the nucleus. In terms of biological role, binds to the LIM domain of a wide variety of LIM domain-containing transcription factors. This chain is LIM domain-binding protein 1-A (ldb1a), found in Danio rerio (Zebrafish).